Here is a 115-residue protein sequence, read N- to C-terminus: Large ribosomal subunit protein bL20c (115 aa).

The protein belongs to the bacterial ribosomal protein bL20 family.

Its subcellular location is the plastid. It localises to the chloroplast. Functionally, binds directly to 23S ribosomal RNA and is necessary for the in vitro assembly process of the 50S ribosomal subunit. It is not involved in the protein synthesizing functions of that subunit. The protein is Large ribosomal subunit protein bL20c (rpl20) of Chlorella vulgaris (Green alga).